We begin with the raw amino-acid sequence, 208 residues long: Holliday junction resolvase RecU (208 aa).

The segment at 1-28 (MNYPNGKPYSKNKPLDGRKSSPFSSNIE) is disordered. Residues Thr-87, Asp-89, Glu-102, and Gln-121 each contribute to the Mg(2+) site.

This sequence belongs to the RecU family. It depends on Mg(2+) as a cofactor.

Its subcellular location is the cytoplasm. It catalyses the reaction Endonucleolytic cleavage at a junction such as a reciprocal single-stranded crossover between two homologous DNA duplexes (Holliday junction).. Its function is as follows. Endonuclease that resolves Holliday junction intermediates in genetic recombination. Cleaves mobile four-strand junctions by introducing symmetrical nicks in paired strands. Promotes annealing of linear ssDNA with homologous dsDNA. Required for DNA repair, homologous recombination and chromosome segregation. The protein is Holliday junction resolvase RecU of Staphylococcus epidermidis (strain ATCC 12228 / FDA PCI 1200).